Reading from the N-terminus, the 792-residue chain is Zinc finger CCCH domain-containing protein 11A (792 aa).

3 C3H1-type zinc fingers span residues 2–29, 31–57, and 60–87; these read PNQG…HCEA, LGNE…HMEI, and KRSE…HTRS. Disordered regions lie at residues 103–191, 223–331, and 345–443; these read PTVP…VHNG, KKMK…KAGE, and ASQK…RSMQ. A Phosphoserine modification is found at serine 108. Glycyl lysine isopeptide (Lys-Gly) (interchain with G-Cter in SUMO2) cross-links involve residues lysine 114 and lysine 124. Residues 115–135 show a composition bias toward polar residues; sequence TSQLTVQQSKLSVQSNPSPQL. The residue at position 132 (serine 132) is a Phosphoserine. Lysine 140 is covalently cross-linked (Glycyl lysine isopeptide (Lys-Gly) (interchain with G-Cter in SUMO2)). Phosphoserine is present on residues serine 149, serine 171, and serine 289. Residues 160-175 are compositionally biased toward acidic residues; it reads ADDDEDDDDQFSEEGD. Composition is skewed to basic and acidic residues over residues 308–331 and 345–360; these read KKVE…KAGE and ASQK…KAEE. The stretch at 338–360 forms a coiled coil; that stretch reads EEILLERASQKRGELQTKLKAEE. Phosphoserine is present on serine 346. Over residues 367–376 the composition is skewed to low complexity; the sequence is SPSGTKSSSS. Composition is skewed to basic and acidic residues over residues 393-405 and 431-443; these read QQEM…KKDT and QPEE…RSMQ. Lysine 454 is covalently cross-linked (Glycyl lysine isopeptide (Lys-Gly) (interchain with G-Cter in SUMO2)). Disordered regions lie at residues 458–531 and 545–571; these read ALRV…PTKL and QRLQ…ASSY. The span at 461 to 473 shows a compositional bias: polar residues; it reads VQQSSESSGNSRP. Basic and acidic residues-rich tracts occupy residues 492–501 and 545–558; these read GVKEEKKCGL and QRLQ…KEKA. Lysine 601 participates in a covalent cross-link: Glycyl lysine isopeptide (Lys-Gly) (interchain with G-Cter in SUMO2). The disordered stretch occupies residues 690-750; that stretch reads LSEDKPVTMS…SASTGKPPLS (61 aa). Residues 698-715 show a composition bias toward polar residues; it reads MSETENPKDSSVLSSAQA. Residues 717-730 show a composition bias toward low complexity; sequence SEPLLPEGSGPSSS.

Interacts with TREX complex components THOC2, DDX39 and POLDIP3; the interactions are ATP-dependent. Interacts with PABPN1; this interaction retains ZC3H11A in nuclear speckles. Interacts with KPNA3.

It localises to the nucleus speckle. In terms of biological role, through its association with TREX complex components, may participate in the export and post-transcriptional coordination of selected mRNA transcripts, including those required to maintain the metabolic processes in embryonic cells. Binds RNA. This Mus musculus (Mouse) protein is Zinc finger CCCH domain-containing protein 11A (Zc3h11a).